The chain runs to 397 residues: Cytoplasmic tRNA 2-thiolation protein 2 (397 aa).

This sequence belongs to the CTU2/NCS2 family.

The protein resides in the cytoplasm. It participates in tRNA modification; 5-methoxycarbonylmethyl-2-thiouridine-tRNA biosynthesis. Plays a central role in 2-thiolation of mcm(5)S(2)U at tRNA wobble positions of tRNA(Lys), tRNA(Glu) and tRNA(Gln). May act by forming a heterodimer with NCS6/CTU1 that ligates sulfur from thiocarboxylated URM1 onto the uridine of tRNAs at wobble position. This Drosophila grimshawi (Hawaiian fruit fly) protein is Cytoplasmic tRNA 2-thiolation protein 2.